We begin with the raw amino-acid sequence, 218 residues long: Ras-related protein Rab-4A (218 aa).

The GTP site is built by Gly-23, Thr-24, Gly-25, Lys-26, Ser-27, Cys-28, Ser-42, His-44, and Thr-45. Position 27 (Ser-27) interacts with Mg(2+). Residues 44 to 49 carry the Switch 1 motif; the sequence is HTIGVE. Mg(2+) contacts are provided by Thr-45 and Asp-68. A Switch 2 motif is present at residues 70-79; the sequence is AGQERFRSVT. A GTP-binding site is contributed by Gly-71. 5-glutamyl serotonin is present on Gln-72. Asn-126, Lys-127, Asp-129, Ala-157, and Leu-158 together coordinate GTP. A Phosphoserine modification is found at Ser-190. Ser-204 carries the post-translational modification Phosphoserine; by CDK1. 2 S-geranylgeranyl cysteine lipidation sites follow: Cys-216 and Cys-218. Residue Cys-218 is modified to Cysteine methyl ester.

It belongs to the small GTPase superfamily. Rab family. In terms of assembly, interacts with RAB11FIP1, RABEP1, ZFYVE20 and RUFY1. Interacts with SGSM1, SGSM2 and SGSM3. Interacts (membrane-bound form) with NDRG1; the interaction involves NDRG1 in vesicular recycling of E-cadherin. Interacts (in GTP-bound form) with GRIPAP1. Interacts with RABEP1 and RBSN. Does not interact with HPS4. Mg(2+) serves as cofactor. In terms of processing, serotonylation of Gln-72 by TGM2 during activation and aggregation of platelets leads to constitutive activation of GTPase activity. Post-translationally, phosphorylated by CDK1 kinase during mitosis.

The protein localises to the membrane. It is found in the cytoplasm. It localises to the early endosome membrane. The protein resides in the recycling endosome membrane. The enzyme catalyses GTP + H2O = GDP + phosphate + H(+). Regulated by guanine nucleotide exchange factors (GEFs) which promote the exchange of bound GDP for free GTP. Regulated by GTPase activating proteins (GAPs) which increase the GTP hydrolysis activity. Inhibited by GDP dissociation inhibitors (GDIs). Functionally, the small GTPases Rab are key regulators of intracellular membrane trafficking, from the formation of transport vesicles to their fusion with membranes. Rabs cycle between an inactive GDP-bound form and an active GTP-bound form that is able to recruit to membranes different sets of downstream effectors directly responsible for vesicle formation, movement, tethering and fusion. RAB4A is involved in protein transport. Also plays a role in vesicular traffic. Mediates VEGFR2 endosomal trafficking to enhance VEGFR2 signaling. Acts as a regulator of platelet alpha-granule release during activation and aggregation of platelets. This is Ras-related protein Rab-4A (RAB4A) from Bos taurus (Bovine).